The sequence spans 1888 residues: Protein mms22 (1888 aa).

Disordered regions lie at residues 12-34 (DSQDSGSEWSNTHGSLISQRGNE), 151-258 (FSSD…ISSN), and 316-354 (RRKLHPRSTAKLSSELGNEISDSDNSISTPTPTDDSRFD). 3 stretches are compositionally biased toward polar residues: residues 13–32 (SQDSGSEWSNTHGSLISQRG), 212–227 (SNLNTADNDLALSSTI), and 338–348 (SDNSISTPTPT).

It belongs to the MMS22 family.

It localises to the nucleus. In terms of biological role, involved in protection against replication-dependent DNA damage. May act by restoring active replication forks, repairing unusual DNA structures, and/or preventing aberrant DNA rearrangement at arrested replication forks. This is Protein mms22 (mus7) from Schizosaccharomyces pombe (strain 972 / ATCC 24843) (Fission yeast).